Here is a 542-residue protein sequence, read N- to C-terminus: Protein MGF 505-11L (542 aa).

This sequence belongs to the asfivirus MGF 505 family.

Functionally, plays a role in virus cell tropism, and may be required for efficient virus replication in macrophages. In African swine fever virus (isolate Tick/Malawi/Lil 20-1/1983) (ASFV), this protein is Protein MGF 505-11L.